We begin with the raw amino-acid sequence, 154 residues long: Large ribosomal subunit protein uL24 (154 aa).

Positions 97–154 are disordered; sequence EIAARKNLPPPEVPEETSNDTKESDENVTGADKEETNEIKEEDLNDNEDKNNDGSQEA. Residues 115 to 135 are compositionally biased toward basic and acidic residues; sequence NDTKESDENVTGADKEETNEI.

This sequence belongs to the universal ribosomal protein uL24 family. In terms of assembly, part of the 50S ribosomal subunit.

In terms of biological role, one of two assembly initiator proteins, it binds directly to the 5'-end of the 23S rRNA, where it nucleates assembly of the 50S subunit. Located at the polypeptide exit tunnel on the outside of the subunit. The protein is Large ribosomal subunit protein uL24 of Picrophilus torridus (strain ATCC 700027 / DSM 9790 / JCM 10055 / NBRC 100828 / KAW 2/3).